A 229-amino-acid chain; its full sequence is Indole-3-glycerol phosphate synthase (229 aa).

It belongs to the TrpC family.

It carries out the reaction 1-(2-carboxyphenylamino)-1-deoxy-D-ribulose 5-phosphate + H(+) = (1S,2R)-1-C-(indol-3-yl)glycerol 3-phosphate + CO2 + H2O. The protein operates within amino-acid biosynthesis; L-tryptophan biosynthesis; L-tryptophan from chorismate: step 4/5. The protein is Indole-3-glycerol phosphate synthase of Pyrococcus abyssi (strain GE5 / Orsay).